A 769-amino-acid chain; its full sequence is Dolichyl-phosphate-mannose--protein mannosyltransferase 2 (769 aa).

A disordered region spans residues 1 to 44; it reads MSTSVEPNETEALLRKQNDLSTTASIEEKYPHQQGEAAEDDDDT. Asparagine 8 is a glycosylation site (N-linked (GlcNAc...) asparagine). A helical membrane pass occupies residues 59–79; it reads SLKQVESILAPIVFTALSFFV. An N-linked (GlcNAc...) asparagine glycan is attached at asparagine 132. Helical transmembrane passes span 152–169, 176–194, and 200–218; these read MRLFNATFSALCVPLAYF, FSMFTTWLFTLMVALESSY, and FILLDSMLLFFTVATVFCF. The N-linked (GlcNAc...) asparagine glycan is linked to asparagine 226. A run of 2 helical transmembrane segments spans residues 252–272 and 288–308; these read VKMVGLFVTTLVGIYTVVDLW and HWFARIVALILVPIFIFMLSF. A glycan (N-linked (GlcNAc...) asparagine) is linked at asparagine 324. In terms of domain architecture, MIR 1 spans 342 to 397; sequence PREVSMFHSVITLKNQGLSGGLLHSHVQTFPEGSKQQQVTTYGHKDSNNNWIFQRA. Residues asparagine 408, asparagine 453, and asparagine 462 are each glycosylated (N-linked (GlcNAc...) asparagine). MIR domains follow at residues 412–468 and 474–534; these read IEYI…VEIM and EDKM…IENN. 4 helical membrane passes run 615–635, 655–675, 679–699, and 718–738; these read TTWTSTVGVILFAFIVLYYLI, FLMGGIYPMFGWGLHFLPFAI, VTYVHHYVPALYFAMLVFCYE, and LLYLAIYIGLLSLVAGTFWYF.

Belongs to the glycosyltransferase 39 family. As to quaternary structure, PMT1 and PMT2 form a functional heterodimer.

It localises to the endoplasmic reticulum membrane. It catalyses the reaction a di-trans,poly-cis-dolichyl beta-D-mannosyl phosphate + L-seryl-[protein] = 3-O-(alpha-D-mannosyl)-L-seryl-[protein] + a di-trans,poly-cis-dolichyl phosphate + H(+). It carries out the reaction a di-trans,poly-cis-dolichyl beta-D-mannosyl phosphate + L-threonyl-[protein] = 3-O-(alpha-D-mannosyl)-L-threonyl-[protein] + a di-trans,poly-cis-dolichyl phosphate + H(+). The protein operates within protein modification; protein glycosylation. In terms of biological role, protein mannosyltransferase (PMT) involved in hyphal growth and drug sensitivity. Transfers mannose from Dol-P-mannose to Ser or Thr residues on proteins. PMT1, PMT2 and PMT4 account for most of the protein-O-glycosylation activity, while PMT5 and PMT6 may specifically modulate a much narrower spectrum of target proteins. Essential protein that plays an important role in virulence. The protein is Dolichyl-phosphate-mannose--protein mannosyltransferase 2 of Candida albicans (strain SC5314 / ATCC MYA-2876) (Yeast).